The primary structure comprises 309 residues: 2-phospho-L-lactate transferase (309 aa).

Residues Asp-50 and Arg-89 each coordinate 7,8-didemethyl-8-hydroxy-5-deazariboflavin.

Belongs to the CofD family. Homodimer. Mg(2+) is required as a cofactor.

The catalysed reaction is (2S)-lactyl-2-diphospho-5'-guanosine + 7,8-didemethyl-8-hydroxy-5-deazariboflavin = oxidized coenzyme F420-0 + GMP + H(+). Its pathway is cofactor biosynthesis; coenzyme F420 biosynthesis. In terms of biological role, catalyzes the transfer of the 2-phospholactate moiety from (2S)-lactyl-2-diphospho-5'-guanosine to 7,8-didemethyl-8-hydroxy-5-deazariboflavin (FO) with the formation of oxidized coenzyme F420-0 and GMP. This is 2-phospho-L-lactate transferase from Methanococcus maripaludis (strain DSM 14266 / JCM 13030 / NBRC 101832 / S2 / LL).